The sequence spans 364 residues: Salivary endonuclease (364 aa).

Positions 1–24 are cleaved as a signal peptide; it reads MSSFFLSISPLVLALFHVVVQVCS. Asparagine 285 is a glycosylation site (N-linked (GlcNAc...) asparagine).

Belongs to the DNA/RNA non-specific endonuclease family. The cofactor is Mg(2+). In terms of tissue distribution, saliva (at protein level). Female salivary gland.

It localises to the secreted. Functionally, hydrolyzes double-stranded DNA with no sequence specificity. Does not cleave ssDNA and RNA. May facilitate blood meal intake by lowering the local viscosity created by the release of host DNA. The sequence is that of Salivary endonuclease from Culex quinquefasciatus (Southern house mosquito).